A 347-amino-acid polypeptide reads, in one-letter code: Extracellular exo-alpha-(1-&gt;5)-L-arabinofuranosidase ArbA (347 aa).

Positions 1-31 are cleaved as a signal peptide; sequence MPTHHPITRQHWHHSWLSALALLCASLACGA. Residue D35 coordinates substrate. The active-site Proton acceptor is D38. Residues 90 to 92, 115 to 116, N155, S175, and E221 each bind substrate; these read DGH and GK. E221 acts as the Proton donor in catalysis. H291 provides a ligand contact to Ca(2+). Substrate is bound at residue Q316.

This sequence belongs to the glycosyl hydrolase 43 family. Homodimer.

It localises to the secreted. It catalyses the reaction Hydrolysis of terminal non-reducing alpha-L-arabinofuranoside residues in alpha-L-arabinosides.. It participates in glycan metabolism; L-arabinan degradation. Involved in the degradation of arabinan and is a key enzyme in the complete degradation of the plant cell wall. Catalyzes the cleavage of the terminal alpha-(1-&gt;5)-arabinofuranosyl bonds of linear arabinan and carboxymethylarabinan to produce almost exclusively arabinotriose. The chain is Extracellular exo-alpha-(1-&gt;5)-L-arabinofuranosidase ArbA (arbA) from Cellvibrio japonicus (strain Ueda107) (Pseudomonas fluorescens subsp. cellulosa).